Consider the following 295-residue polypeptide: Probable endonuclease 4 (295 aa).

The Zn(2+) site is built by His-78, His-118, Glu-154, Asp-188, His-191, His-225, Asp-238, His-240, and Glu-270.

This sequence belongs to the AP endonuclease 2 family. It depends on Zn(2+) as a cofactor.

The catalysed reaction is Endonucleolytic cleavage to 5'-phosphooligonucleotide end-products.. Functionally, endonuclease IV plays a role in DNA repair. It cleaves phosphodiester bonds at apurinic or apyrimidinic (AP) sites, generating a 3'-hydroxyl group and a 5'-terminal sugar phosphate. The chain is Probable endonuclease 4 from Vibrio parahaemolyticus serotype O3:K6 (strain RIMD 2210633).